Consider the following 254-residue polypeptide: 3-deoxy-manno-octulosonate cytidylyltransferase (254 aa).

It belongs to the KdsB family.

The protein localises to the cytoplasm. It catalyses the reaction 3-deoxy-alpha-D-manno-oct-2-ulosonate + CTP = CMP-3-deoxy-beta-D-manno-octulosonate + diphosphate. It functions in the pathway nucleotide-sugar biosynthesis; CMP-3-deoxy-D-manno-octulosonate biosynthesis; CMP-3-deoxy-D-manno-octulosonate from 3-deoxy-D-manno-octulosonate and CTP: step 1/1. Its pathway is bacterial outer membrane biogenesis; lipopolysaccharide biosynthesis. In terms of biological role, activates KDO (a required 8-carbon sugar) for incorporation into bacterial lipopolysaccharide in Gram-negative bacteria. The chain is 3-deoxy-manno-octulosonate cytidylyltransferase from Chlamydia abortus (strain DSM 27085 / S26/3) (Chlamydophila abortus).